Reading from the N-terminus, the 287-residue chain is Large ribosomal subunit protein uL2 (287 aa).

The interval 221–287 is disordered; that stretch reads RGSVMNPCDH…SKRSRGGRDS (67 aa). Residues 258-287 show a composition bias toward basic residues; sequence KTRKRNKPSNRFVLRKRRRTSKRSRGGRDS.

This sequence belongs to the universal ribosomal protein uL2 family. Part of the 50S ribosomal subunit. Forms a bridge to the 30S subunit in the 70S ribosome.

In terms of biological role, one of the primary rRNA binding proteins. Required for association of the 30S and 50S subunits to form the 70S ribosome, for tRNA binding and peptide bond formation. It has been suggested to have peptidyltransferase activity; this is somewhat controversial. Makes several contacts with the 16S rRNA in the 70S ribosome. This Prochlorococcus marinus (strain MIT 9313) protein is Large ribosomal subunit protein uL2.